We begin with the raw amino-acid sequence, 559 residues long: Chaperonin GroEL 1 (559 aa).

Residues T29–P32, D86–T90, G413, N476–L478, and D492 each bind ATP. A disordered region spans residues K521–G541.

This sequence belongs to the chaperonin (HSP60) family. Forms a cylinder of 14 subunits composed of two heptameric rings stacked back-to-back. Interacts with the co-chaperonin GroES.

The protein resides in the cytoplasm. The enzyme catalyses ATP + H2O + a folded polypeptide = ADP + phosphate + an unfolded polypeptide.. Functionally, together with its co-chaperonin GroES, plays an essential role in assisting protein folding. The GroEL-GroES system forms a nano-cage that allows encapsulation of the non-native substrate proteins and provides a physical environment optimized to promote and accelerate protein folding. In Synechococcus sp. (strain CC9605), this protein is Chaperonin GroEL 1.